The sequence spans 374 residues: N5-carboxyaminoimidazole ribonucleotide synthase (374 aa).

ATP-binding positions include arginine 108, lysine 148, 153–159 (GYDGKGQ), 183–186 (EQFL), glutamate 191, histidine 214, and 266–267 (NE). Residues 112 to 296 (KQTLQKAGSK…QFDTHILAVT (185 aa)) enclose the ATP-grasp domain.

Belongs to the PurK/PurT family. As to quaternary structure, homodimer.

It carries out the reaction 5-amino-1-(5-phospho-beta-D-ribosyl)imidazole + hydrogencarbonate + ATP = 5-carboxyamino-1-(5-phospho-D-ribosyl)imidazole + ADP + phosphate + 2 H(+). Its pathway is purine metabolism; IMP biosynthesis via de novo pathway; 5-amino-1-(5-phospho-D-ribosyl)imidazole-4-carboxylate from 5-amino-1-(5-phospho-D-ribosyl)imidazole (N5-CAIR route): step 1/2. Functionally, catalyzes the ATP-dependent conversion of 5-aminoimidazole ribonucleotide (AIR) and HCO(3)(-) to N5-carboxyaminoimidazole ribonucleotide (N5-CAIR). The chain is N5-carboxyaminoimidazole ribonucleotide synthase from Staphylococcus haemolyticus (strain JCSC1435).